Here is a 37-residue protein sequence, read N- to C-terminus: FDGRNAAGNDKMSALMALTTRGCCSHPVCSAMSPICG.

Positions 1-21 are excised as a propeptide; sequence FDGRNAAGNDKMSALMALTTR. 2 cysteine pairs are disulfide-bonded: Cys23–Cys29 and Cys24–Cys36. Cys36 carries the cysteine amide modification.

The protein belongs to the conotoxin A superfamily. In terms of processing, unmodified Met-32 is essential for toxin binding to rat alpha-3-beta-4/CHRNA3-CHRNB4 nAChR. An oxidation of this methionine provokes a 13.3-fold decrease in inhibitory potency (IC(50)=245 nM instead of 18 nM). Owing to its potent activity, derivatives of this toxin have a potential in the development of a novel drug. Unfortunately, the oxidation of the methionine is readily to happen during toxin synthesis and oxidation steps as well as under oxidative environment in vivo, which should still be considered to find a solution to this major drawback. In terms of tissue distribution, expressed by the venom duct.

It localises to the secreted. Functionally, alpha-conotoxins act on postsynaptic membranes, they bind to the nicotinic acetylcholine receptors (nAChR) and thus inhibit them. This toxin inhibits alpha-3-beta-4/CHRNA3-CHRNB4 (IC(50)=3.6-18.38 nM), alpha-6/alpha-3-beta-4 (CHRNA6/CHRNA3-CHRNB4) (IC(50)=33.9-94.1 nM), and alpha-2-beta-4/CHRNA2-CHRNB4 (IC(50)=4550 nM) nAChRs. The toxin competes with agonists in the orthosteric binding site of alpha-3-beta-4/CHRNA3-CHRNB4 and alpha-6-beta-4/CHRNA6-CHRNB4. The polypeptide is Alpha-conotoxin TxID (Conus textile (Cloth-of-gold cone)).